The chain runs to 475 residues: Citrate synthase, mitochondrial (475 aa).

Residues H310, H356, and D411 contribute to the active site.

It belongs to the citrate synthase family.

It localises to the mitochondrion matrix. It carries out the reaction oxaloacetate + acetyl-CoA + H2O = citrate + CoA + H(+). The protein operates within carbohydrate metabolism; tricarboxylic acid cycle; isocitrate from oxaloacetate: step 1/2. This chain is Citrate synthase, mitochondrial (cit-1), found in Aspergillus niger.